The chain runs to 129 residues: Small ribosomal subunit protein uS11 (129 aa).

It belongs to the universal ribosomal protein uS11 family. In terms of assembly, part of the 30S ribosomal subunit. Interacts with proteins S7 and S18. Binds to IF-3.

Functionally, located on the platform of the 30S subunit, it bridges several disparate RNA helices of the 16S rRNA. Forms part of the Shine-Dalgarno cleft in the 70S ribosome. In Nitratidesulfovibrio vulgaris (strain DSM 19637 / Miyazaki F) (Desulfovibrio vulgaris), this protein is Small ribosomal subunit protein uS11.